Consider the following 281-residue polypeptide: 4-diphosphocytidyl-2-C-methyl-D-erythritol kinase (281 aa).

The active site involves K11. P95–S105 is an ATP binding site. Residue D137 is part of the active site.

The protein belongs to the GHMP kinase family. IspE subfamily.

The enzyme catalyses 4-CDP-2-C-methyl-D-erythritol + ATP = 4-CDP-2-C-methyl-D-erythritol 2-phosphate + ADP + H(+). Its pathway is isoprenoid biosynthesis; isopentenyl diphosphate biosynthesis via DXP pathway; isopentenyl diphosphate from 1-deoxy-D-xylulose 5-phosphate: step 3/6. Catalyzes the phosphorylation of the position 2 hydroxy group of 4-diphosphocytidyl-2C-methyl-D-erythritol. This Geobacter metallireducens (strain ATCC 53774 / DSM 7210 / GS-15) protein is 4-diphosphocytidyl-2-C-methyl-D-erythritol kinase.